Reading from the N-terminus, the 197-residue chain is MASIQNLYETVVGVLGDQASKVISALGEITVECLPEHYISVMTALRDHEELHFELLVDLCGVDYSTYKNEVWQGKRFAVVSQLLSVKNNQRIRVRVWVSDDDFPVVESVVDIYNSADWYEREAFDMYGIMFNNHPDLRRILTDYGFVGHPFRKDFPISGYVEMRYDEEQKRVIYQPVTIEPREITPRIVREENYGGQ.

The protein belongs to the complex I 30 kDa subunit family. NDH-1 is composed of 14 different subunits. Subunits NuoB, C, D, E, F, and G constitute the peripheral sector of the complex.

Its subcellular location is the cell inner membrane. It carries out the reaction a quinone + NADH + 5 H(+)(in) = a quinol + NAD(+) + 4 H(+)(out). Functionally, NDH-1 shuttles electrons from NADH, via FMN and iron-sulfur (Fe-S) centers, to quinones in the respiratory chain. The immediate electron acceptor for the enzyme in this species is believed to be ubiquinone. Couples the redox reaction to proton translocation (for every two electrons transferred, four hydrogen ions are translocated across the cytoplasmic membrane), and thus conserves the redox energy in a proton gradient. The sequence is that of NADH-quinone oxidoreductase subunit C from Neisseria meningitidis serogroup A / serotype 4A (strain DSM 15465 / Z2491).